The primary structure comprises 156 residues: uncharacterized protein (156 aa).

His-55 is an active-site residue.

This sequence belongs to the thioester dehydratase family. FabZ subfamily.

This is an uncharacterized protein from Halalkalibacterium halodurans (strain ATCC BAA-125 / DSM 18197 / FERM 7344 / JCM 9153 / C-125) (Bacillus halodurans).